The chain runs to 316 residues: Metal cation efflux system protein CzcD (316 aa).

The Cytoplasmic portion of the chain corresponds to 1 to 16; it reads MGAGHSHDHPGGNERS. A helical membrane pass occupies residues 17–37; that stretch reads LKIALALTGTFLIAEVVGGVM. The Periplasmic portion of the chain corresponds to 38 to 46; sequence TKSLALISD. Residues 47–67 form a helical membrane-spanning segment; sequence AAHMLTDTVALAIALAAIAIA. Residues 68–81 lie on the Cytoplasmic side of the membrane; sequence KRPADKKRTFGYYR. A helical transmembrane segment spans residues 82 to 102; sequence FEILAAAFNALLLFGVAIYIL. The Periplasmic portion of the chain corresponds to 103 to 114; the sequence is YEAYLRLKSPPQ. A helical membrane pass occupies residues 115-135; it reads IESTGMFVVAVLGLIINLISM. The Cytoplasmic portion of the chain corresponds to 136-151; sequence RMLSSGQSSSLNVKGA. Helical transmembrane passes span 152–172 and 174–194; these read YLEV…AIII and FTGW…WVLP. Over 195–316 the chain is Cytoplasmic; the sequence is RTWILLKSSL…GSKSLAAGGN (122 aa).

Belongs to the cation diffusion facilitator (CDF) transporter (TC 2.A.4) family. SLC30A subfamily.

The protein localises to the cell inner membrane. With respect to regulation, efflux is inhibited by FCCP. Mediates a low-level metal ion resistance, probably by efflux of cations from the cytoplasm into the periplasm. Also mediates resistance to cobalt, cadmium and zinc via regulation of the Czc system. May repress expression of the Czc system by an export of the inducing cations. Binds and transports zinc. Can also bind cobalt, copper and nickel. This Cupriavidus metallidurans (strain ATCC 43123 / DSM 2839 / NBRC 102507 / CH34) (Ralstonia metallidurans) protein is Metal cation efflux system protein CzcD (czcD).